A 246-amino-acid chain; its full sequence is Acetoacetate decarboxylase (246 aa).

The Schiff-base intermediate with acetoacetate role is filled by Lys-116.

Belongs to the ADC family. Homododecamer.

The catalysed reaction is acetoacetate + H(+) = acetone + CO2. Catalyzes the conversion of acetoacetate to acetone and carbon dioxide. The protein is Acetoacetate decarboxylase of Chromobacterium violaceum (strain ATCC 12472 / DSM 30191 / JCM 1249 / CCUG 213 / NBRC 12614 / NCIMB 9131 / NCTC 9757 / MK).